Consider the following 114-residue polypeptide: DNA polymerase epsilon subunit C (114 aa).

Residues 91-114 are disordered; that stretch reads PDAVAPATGEEEQPKRRGRKPAQE.

Heterotetramer. Consists of four subunits: POL2, DPB2, DPB3 and DPB4.

It is found in the nucleus. Its function is as follows. As accessory component of the DNA polymerase epsilon (DNA polymerase II) participates in chromosomal DNA replication. In Yarrowia lipolytica (strain CLIB 122 / E 150) (Yeast), this protein is DNA polymerase epsilon subunit C (DPB3).